The sequence spans 249 residues: DNA repair protein RecO (249 aa).

It belongs to the RecO family.

In terms of biological role, involved in DNA repair and RecF pathway recombination. The sequence is that of DNA repair protein RecO from Sinorhizobium medicae (strain WSM419) (Ensifer medicae).